The primary structure comprises 132 residues: Small ribosomal subunit protein uS8 (132 aa).

It belongs to the universal ribosomal protein uS8 family. Part of the 30S ribosomal subunit. Contacts proteins S5 and S12.

Its function is as follows. One of the primary rRNA binding proteins, it binds directly to 16S rRNA central domain where it helps coordinate assembly of the platform of the 30S subunit. The sequence is that of Small ribosomal subunit protein uS8 from Mycolicibacterium vanbaalenii (strain DSM 7251 / JCM 13017 / BCRC 16820 / KCTC 9966 / NRRL B-24157 / PYR-1) (Mycobacterium vanbaalenii).